Reading from the N-terminus, the 371-residue chain is Chaperone protein DnaJ (371 aa).

The J domain occupies 5–70; that stretch reads DYYEVLGVNR…QKRAAYDQYG (66 aa). Residues 31-52 form a disordered region; the sequence is KYHPDRNPDNPKAEESFKEAKE. The span at 32–52 shows a compositional bias: basic and acidic residues; it reads YHPDRNPDNPKAEESFKEAKE. A CR-type zinc finger spans residues 132 to 210; sequence RTETKIRIPV…CQGAGRVKKH (79 aa). Residues cysteine 145, cysteine 148, cysteine 162, cysteine 165, cysteine 184, cysteine 187, cysteine 198, and cysteine 201 each coordinate Zn(2+). CXXCXGXG motif repeat units lie at residues 145–152, 162–169, 184–191, and 198–205; these read CETCHGSG, CTTCGGHG, CPKCHGSG, and CPSCQGAG.

The protein belongs to the DnaJ family. As to quaternary structure, homodimer. Zn(2+) serves as cofactor.

Its subcellular location is the cytoplasm. Its function is as follows. Participates actively in the response to hyperosmotic and heat shock by preventing the aggregation of stress-denatured proteins and by disaggregating proteins, also in an autonomous, DnaK-independent fashion. Unfolded proteins bind initially to DnaJ; upon interaction with the DnaJ-bound protein, DnaK hydrolyzes its bound ATP, resulting in the formation of a stable complex. GrpE releases ADP from DnaK; ATP binding to DnaK triggers the release of the substrate protein, thus completing the reaction cycle. Several rounds of ATP-dependent interactions between DnaJ, DnaK and GrpE are required for fully efficient folding. Also involved, together with DnaK and GrpE, in the DNA replication of plasmids through activation of initiation proteins. This is Chaperone protein DnaJ from Methylovorus sp. (strain SS1 / DSM 11726).